We begin with the raw amino-acid sequence, 839 residues long: Dynein axonemal assembly factor 5 (839 aa).

HEAT repeat units lie at residues 10–48 (TSDV…DEKL), 54–92 (QHVF…HVPR), 94–137 (EEAL…VCGK), 140–178 (APYL…CIPE), 181–219 (HMQA…YSSG), 221–257 (SVDD…KLQD), 259–297 (YSFF…QWEK), 578–617 (GETL…KASE), 675–713 (LQVE…TCER), 717–755 (PDKL…CITD), and 723–761 (IYPE…ERTT).

This sequence belongs to the DNAAF5 family. As to quaternary structure, interacts with DNAI2; probably involved in outer arm dynein assembly.

The protein localises to the cytoplasm. Its subcellular location is the dynein axonemal particle. In terms of biological role, cytoplasmic protein involved in the delivery of the dynein machinery to the motile cilium. It is required for the assembly of the axonemal dynein inner and outer arms, two structures attached to the peripheral outer doublet A microtubule of the axoneme, that play a crucial role in cilium motility. This is Dynein axonemal assembly factor 5 from Xenopus laevis (African clawed frog).